The chain runs to 319 residues: MTGPEWAHTRGTKVGQSSRTPPKVAVLLGGPSVEREVSLSSGQACAAALRDEGYDVVEIDAGHDLGARLIDAGPDAVLNCLHGRWGEDGCVQGLLEWMGVPYSHSGVLASALAMDKQRSKDAFVAAGLPVVPSVIAKAADVRMGHVMQPPYVVKPNNEGSSVGVYLVHEAANGPPQLSEDMPQEVMVEAFAPGRELTTTVVGDRALTVTDIVTDGWYDYDAKYKPGGSHHVVPADIPADIFDLCMDYALRAHHALGCRGVSRTDFRWDETKGAAGLILLETNTQPGMTATSLTPEQAAVTGMTFGKLCAWMVEDASCDR.

The interval Met-1 to Lys-23 is disordered. One can recognise an ATP-grasp domain in the interval Lys-120–Glu-313. Residue Met-147 to Thr-197 coordinates ATP. Asp-264, Glu-280, and Asn-282 together coordinate Mg(2+).

This sequence belongs to the D-alanine--D-alanine ligase family. The cofactor is Mg(2+). Requires Mn(2+) as cofactor.

It is found in the cytoplasm. The catalysed reaction is 2 D-alanine + ATP = D-alanyl-D-alanine + ADP + phosphate + H(+). It participates in cell wall biogenesis; peptidoglycan biosynthesis. Its function is as follows. Cell wall formation. The chain is D-alanine--D-alanine ligase from Roseobacter denitrificans (strain ATCC 33942 / OCh 114) (Erythrobacter sp. (strain OCh 114)).